The sequence spans 162 residues: Protein mmf1, mitochondrial (162 aa).

Belongs to the RutC family.

Its subcellular location is the mitochondrion. The protein resides in the cytoplasm. Plays a role in the maintenance of mitochondrial DNA. The sequence is that of Protein mmf1, mitochondrial (mmf1) from Schizosaccharomyces pombe (strain 972 / ATCC 24843) (Fission yeast).